The sequence spans 94 residues: Pyrimidine/purine nucleoside phosphorylase (94 aa).

The protein belongs to the nucleoside phosphorylase PpnP family.

It catalyses the reaction a purine D-ribonucleoside + phosphate = a purine nucleobase + alpha-D-ribose 1-phosphate. It carries out the reaction adenosine + phosphate = alpha-D-ribose 1-phosphate + adenine. The enzyme catalyses cytidine + phosphate = cytosine + alpha-D-ribose 1-phosphate. The catalysed reaction is guanosine + phosphate = alpha-D-ribose 1-phosphate + guanine. It catalyses the reaction inosine + phosphate = alpha-D-ribose 1-phosphate + hypoxanthine. It carries out the reaction thymidine + phosphate = 2-deoxy-alpha-D-ribose 1-phosphate + thymine. The enzyme catalyses uridine + phosphate = alpha-D-ribose 1-phosphate + uracil. The catalysed reaction is xanthosine + phosphate = alpha-D-ribose 1-phosphate + xanthine. Catalyzes the phosphorolysis of diverse nucleosides, yielding D-ribose 1-phosphate and the respective free bases. Can use uridine, adenosine, guanosine, cytidine, thymidine, inosine and xanthosine as substrates. Also catalyzes the reverse reactions. The polypeptide is Pyrimidine/purine nucleoside phosphorylase (Pseudomonas putida (strain W619)).